The chain runs to 323 residues: GTP 3',8-cyclase (323 aa).

One can recognise a Radical SAM core domain in the interval 4-233 (KYGREIDYLR…NGPAKYISIE (230 aa)). Arg-13 contributes to the GTP binding site. Residues Cys-20 and Cys-24 each coordinate [4Fe-4S] cluster. Residue Tyr-26 coordinates S-adenosyl-L-methionine. Position 27 (Cys-27) interacts with [4Fe-4S] cluster. Position 63 (Arg-63) interacts with GTP. Gly-67 is a binding site for S-adenosyl-L-methionine. Thr-94 lines the GTP pocket. Residue Ser-118 participates in S-adenosyl-L-methionine binding. Lys-154 contributes to the GTP binding site. Met-188 provides a ligand contact to S-adenosyl-L-methionine. The [4Fe-4S] cluster site is built by Cys-250 and Cys-253. 255–257 (RIR) is a GTP binding site. Cys-267 serves as a coordination point for [4Fe-4S] cluster.

It belongs to the radical SAM superfamily. MoaA family. Monomer and homodimer. The cofactor is [4Fe-4S] cluster.

It carries out the reaction GTP + AH2 + S-adenosyl-L-methionine = (8S)-3',8-cyclo-7,8-dihydroguanosine 5'-triphosphate + 5'-deoxyadenosine + L-methionine + A + H(+). The protein operates within cofactor biosynthesis; molybdopterin biosynthesis. In terms of biological role, catalyzes the cyclization of GTP to (8S)-3',8-cyclo-7,8-dihydroguanosine 5'-triphosphate. In Clostridium perfringens (strain SM101 / Type A), this protein is GTP 3',8-cyclase.